Here is a 241-residue protein sequence, read N- to C-terminus: 2-C-methyl-D-erythritol 4-phosphate cytidylyltransferase (241 aa).

Belongs to the IspD/TarI cytidylyltransferase family. IspD subfamily.

It carries out the reaction 2-C-methyl-D-erythritol 4-phosphate + CTP + H(+) = 4-CDP-2-C-methyl-D-erythritol + diphosphate. Its pathway is isoprenoid biosynthesis; isopentenyl diphosphate biosynthesis via DXP pathway; isopentenyl diphosphate from 1-deoxy-D-xylulose 5-phosphate: step 2/6. Catalyzes the formation of 4-diphosphocytidyl-2-C-methyl-D-erythritol from CTP and 2-C-methyl-D-erythritol 4-phosphate (MEP). This chain is 2-C-methyl-D-erythritol 4-phosphate cytidylyltransferase, found in Mycobacterium leprae (strain Br4923).